The sequence spans 583 residues: Putative amidase C869.01 (583 aa).

Residues 1–19 form the signal peptide; that stretch reads MKLQLLFLTLAQLAKHGLA. Active-site charge relay system residues include lysine 141 and serine 222. Residue serine 246 is the Acyl-ester intermediate of the active site.

Belongs to the amidase family.

The protein resides in the cytoplasm. The enzyme catalyses a monocarboxylic acid amide + H2O = a monocarboxylate + NH4(+). The sequence is that of Putative amidase C869.01 from Schizosaccharomyces pombe (strain 972 / ATCC 24843) (Fission yeast).